A 622-amino-acid polypeptide reads, in one-letter code: Membrane protein insertase YidC (622 aa).

A helical transmembrane segment spans residues 6–26 (IVLLIIFSTSLLFLWDAWVKE). The interval 47–87 (TQSKNNDGLPIPGSELTASQTGSDLNGIPSSGDTADSVTPR) is disordered. Positions 62–83 (LTASQTGSDLNGIPSSGDTADS) are enriched in polar residues. Helical transmembrane passes span 381–401 (WGIA…PLSA), 451–471 (FPIL…LAAV), and 525–545 (PVAF…YSLV). Residues 563–622 (TAPSQDAPESPASKDAPELPVSNQVINDSENTEAPASGPADSPKKPVNIPRRMHKRTRKK) are disordered. Over residues 583-596 (VSNQVINDSENTEA) the composition is skewed to polar residues. Over residues 613 to 622 (RRMHKRTRKK) the composition is skewed to basic residues.

The protein belongs to the OXA1/ALB3/YidC family. Type 1 subfamily. Interacts with the Sec translocase complex via SecD. Specifically interacts with transmembrane segments of nascent integral membrane proteins during membrane integration.

It is found in the cell inner membrane. Required for the insertion and/or proper folding and/or complex formation of integral membrane proteins into the membrane. Involved in integration of membrane proteins that insert both dependently and independently of the Sec translocase complex, as well as at least some lipoproteins. Aids folding of multispanning membrane proteins. The protein is Membrane protein insertase YidC of Nitrosomonas eutropha (strain DSM 101675 / C91 / Nm57).